The primary structure comprises 521 residues: CDP-diacylglycerol--glycerol-3-phosphate 3-phosphatidyltransferase (521 aa).

A91–S98 is an ATP binding site. 2 PLD phosphodiesterase domains span residues G177–Y203 and N419–A457. Catalysis depends on residues H182, K184, and D189.

Belongs to the CDP-alcohol phosphatidyltransferase class-II family.

It localises to the mitochondrion. The catalysed reaction is a CDP-1,2-diacyl-sn-glycerol + sn-glycerol 3-phosphate = a 1,2-diacyl-sn-glycero-3-phospho-(1'-sn-glycero-3'-phosphate) + CMP + H(+). The protein operates within phospholipid metabolism; phosphatidylglycerol biosynthesis; phosphatidylglycerol from CDP-diacylglycerol: step 1/2. In terms of biological role, essential for the viability of mitochondrial petite mutant. Catalyzes the committed step to the synthesis of the acidic phospholipids. In Saccharomyces pastorianus (Lager yeast), this protein is CDP-diacylglycerol--glycerol-3-phosphate 3-phosphatidyltransferase (PGS1).